The following is a 294-amino-acid chain: Glyceraldehyde-3-phosphate dehydrogenase (294 aa).

NAD(+) is bound by residues aspartate 19, lysine 63, and threonine 105. D-glyceraldehyde 3-phosphate contacts are provided by residues 134–136, threonine 165, 194–195, and arginine 217; these read SCT and TG. Catalysis depends on cysteine 135, which acts as the Nucleophile.

This sequence belongs to the glyceraldehyde-3-phosphate dehydrogenase family. In terms of assembly, homotetramer.

It localises to the cytoplasm. It carries out the reaction D-glyceraldehyde 3-phosphate + phosphate + NAD(+) = (2R)-3-phospho-glyceroyl phosphate + NADH + H(+). The protein operates within carbohydrate degradation; glycolysis; pyruvate from D-glyceraldehyde 3-phosphate: step 1/5. Functionally, catalyzes the oxidative phosphorylation of glyceraldehyde 3-phosphate (G3P) to 1,3-bisphosphoglycerate (BPG) using the cofactor NAD. The first reaction step involves the formation of a hemiacetal intermediate between G3P and a cysteine residue, and this hemiacetal intermediate is then oxidized to a thioester, with concomitant reduction of NAD to NADH. The reduced NADH is then exchanged with the second NAD, and the thioester is attacked by a nucleophilic inorganic phosphate to produce BPG. This chain is Glyceraldehyde-3-phosphate dehydrogenase (gap), found in Atlantibacter hermannii (Escherichia hermannii).